Reading from the N-terminus, the 198-residue chain is uncharacterized protein (198 aa).

Residues Glu11–Arg71 enclose the HTH tetR-type domain. The H-T-H motif DNA-binding region spans Thr34–Trp53.

This is an uncharacterized protein from Bacillus subtilis (strain 168).